Here is a 335-residue protein sequence, read N- to C-terminus: Cell division protein ZipA (335 aa).

Residues 1–6 (MENLQL) are Periplasmic-facing. Residues 7 to 27 (VLFVLGAVAIIAVLVHGFWSI) form a helical membrane-spanning segment. Over 28–335 (RRQQPKSLKE…SYLQRIRAQM (308 aa)) the chain is Cytoplasmic. Disordered stretches follow at residues 37–128 (ESPM…NEEV) and 163–185 (RPAPRVEAPQSVAPASVEPVSVE). The segment covering 170–185 (APQSVAPASVEPVSVE) has biased composition (low complexity).

This sequence belongs to the ZipA family. Interacts with FtsZ via their C-terminal domains.

The protein localises to the cell inner membrane. Functionally, essential cell division protein that stabilizes the FtsZ protofilaments by cross-linking them and that serves as a cytoplasmic membrane anchor for the Z ring. Also required for the recruitment to the septal ring of downstream cell division proteins. This chain is Cell division protein ZipA, found in Shewanella loihica (strain ATCC BAA-1088 / PV-4).